A 424-amino-acid polypeptide reads, in one-letter code: MSYRRPKGTYDVYPGDAARQEPHERPDLWDRLYDAARDLFRRYGYAEVRTPVFEEAELFVRSTGETSDIVRKEMFVFRDKAGRELALRPEGTAGVVRAYVEHGLYKLAQPVKMWYFGPMFRHERQQKGRYRQHTQIGAEVLGSGDPLVDVEVVALLYAIHRSAGVREEVIHLNNLGDVETRRRYVPELRAFLERHRSELDPDSVARIETNPLRTFDSKDPNTRAVLREAPLIGEYLSEEAAAHLRAVEEGLEALGIPYVRDERLVRGLDYYTSTVFEAKSPVLGAQDTVGAGGRYNRLVEELGGPDVPGIGFGTGVERVLLAARAAEPESALDAFFVTLSPEARLPALQLAEALRAEGLSCELDYAGRSPKGQFRQADRSGASYAVVLGEEELSGGFCTLRDMKSGEERRVSGGPKGLLRAIAG.

The segment at 1 to 22 is disordered; the sequence is MSYRRPKGTYDVYPGDAARQEP.

It belongs to the class-II aminoacyl-tRNA synthetase family. As to quaternary structure, homodimer.

It localises to the cytoplasm. It carries out the reaction tRNA(His) + L-histidine + ATP = L-histidyl-tRNA(His) + AMP + diphosphate + H(+). This is Histidine--tRNA ligase from Rubrobacter xylanophilus (strain DSM 9941 / JCM 11954 / NBRC 16129 / PRD-1).